A 425-amino-acid polypeptide reads, in one-letter code: Glutamate-1-semialdehyde 2,1-aminomutase (425 aa).

The residue at position 265 (K265) is an N6-(pyridoxal phosphate)lysine.

This sequence belongs to the class-III pyridoxal-phosphate-dependent aminotransferase family. HemL subfamily. Homodimer. Pyridoxal 5'-phosphate is required as a cofactor.

It localises to the cytoplasm. It carries out the reaction (S)-4-amino-5-oxopentanoate = 5-aminolevulinate. It participates in porphyrin-containing compound metabolism; protoporphyrin-IX biosynthesis; 5-aminolevulinate from L-glutamyl-tRNA(Glu): step 2/2. The protein is Glutamate-1-semialdehyde 2,1-aminomutase of Laribacter hongkongensis (strain HLHK9).